An 89-amino-acid polypeptide reads, in one-letter code: Small ribosomal subunit protein uS15 (89 aa).

It belongs to the universal ribosomal protein uS15 family. Part of the 30S ribosomal subunit. Forms a bridge to the 50S subunit in the 70S ribosome, contacting the 23S rRNA.

In terms of biological role, one of the primary rRNA binding proteins, it binds directly to 16S rRNA where it helps nucleate assembly of the platform of the 30S subunit by binding and bridging several RNA helices of the 16S rRNA. Its function is as follows. Forms an intersubunit bridge (bridge B4) with the 23S rRNA of the 50S subunit in the ribosome. The polypeptide is Small ribosomal subunit protein uS15 (Pediococcus pentosaceus (strain ATCC 25745 / CCUG 21536 / LMG 10740 / 183-1w)).